Consider the following 321-residue polypeptide: Probable heme-iron transport system permease protein IsdF (321 aa).

The next 9 membrane-spanning stretches (helical) occupy residues leucine 9 to glycine 29, isoleucine 61 to alanine 81, alanine 89 to isoleucine 109, phenylalanine 114 to leucine 134, valine 143 to leucine 163, isoleucine 179 to leucine 199, valine 233 to valine 253, leucine 267 to arginine 287, and glutamate 294 to cysteine 314.

This sequence belongs to the binding-protein-dependent transport system permease family. FecCD subfamily.

The protein resides in the cell membrane. In terms of biological role, part of the binding-protein-dependent transport system for heme-iron. Responsible for the translocation of the substrate across the membrane. The sequence is that of Probable heme-iron transport system permease protein IsdF (isdF) from Staphylococcus aureus (strain NCTC 8325 / PS 47).